The following is a 329-amino-acid chain: Beta-ketoacyl-[acyl-carrier-protein] synthase III (329 aa).

Catalysis depends on residues C123 and H256. The tract at residues 257–261 (QANIR) is ACP-binding. The active site involves N286.

Belongs to the thiolase-like superfamily. FabH family. In terms of assembly, homodimer.

The protein localises to the cytoplasm. It catalyses the reaction malonyl-[ACP] + acetyl-CoA + H(+) = 3-oxobutanoyl-[ACP] + CO2 + CoA. It participates in lipid metabolism; fatty acid biosynthesis. Catalyzes the condensation reaction of fatty acid synthesis by the addition to an acyl acceptor of two carbons from malonyl-ACP. Catalyzes the first condensation reaction which initiates fatty acid synthesis and may therefore play a role in governing the total rate of fatty acid production. Possesses both acetoacetyl-ACP synthase and acetyl transacylase activities. Its substrate specificity determines the biosynthesis of branched-chain and/or straight-chain of fatty acids. The chain is Beta-ketoacyl-[acyl-carrier-protein] synthase III from Burkholderia mallei (strain NCTC 10247).